We begin with the raw amino-acid sequence, 238 residues long: Survival of motor neuron-related-splicing factor 30 (238 aa).

In terms of domain architecture, Tudor spans 72 to 132 (SWKVGDKCMA…KPVEEGRKAK (61 aa)). The Nuclear localization signal signature appears at 142-160 (KKEMIAQQREYKKKKALKK). Position 201 is a phosphoserine (serine 201). Lysine 219 is modified (N6-acetyllysine).

The protein belongs to the SMN family. In terms of assembly, associates with spliceosomes. Associates with U4/U5/U6 tri-snRNP and with U2 snRNP.

It localises to the nucleus speckle. The protein resides in the nucleus. The protein localises to the cajal body. Involved in spliceosome assembly. This is Survival of motor neuron-related-splicing factor 30 (SMNDC1) from Pongo abelii (Sumatran orangutan).